We begin with the raw amino-acid sequence, 196 residues long: Thymidine kinase (196 aa).

Residues 9-16 (SAMNAGKS) and 88-91 (DEAQ) contribute to the ATP site. Glu-89 acts as the Proton acceptor in catalysis. Zn(2+)-binding residues include Cys-146, Cys-148, Cys-183, and His-186.

This sequence belongs to the thymidine kinase family. Homotetramer.

Its subcellular location is the cytoplasm. The catalysed reaction is thymidine + ATP = dTMP + ADP + H(+). This chain is Thymidine kinase, found in Coxiella burnetii (strain RSA 493 / Nine Mile phase I).